Reading from the N-terminus, the 295-residue chain is Keratin-like protein KRT222 (295 aa).

Residues 1 to 150 enclose the IF rod domain; that stretch reads MELSQLLNEI…HLLEKEEIRY (150 aa). A coiled-coil region spans residues 2–150; that stretch reads ELSQLLNEIR…HLLEKEEIRY (149 aa).

Belongs to the intermediate filament family.

The sequence is that of Keratin-like protein KRT222 (KRT222) from Homo sapiens (Human).